Reading from the N-terminus, the 947-residue chain is Probable outer membrane protein pmp19 (947 aa).

The signal sequence occupies residues 1-19 (MKQMRLWGFLFLSSFCQVS). The region spanning 672–947 (IPLQHLCVFG…NAHAGLSLSF (276 aa)) is the Autotransporter domain.

It belongs to the PMP outer membrane protein family.

It is found in the secreted. The protein localises to the cell wall. The protein resides in the cell outer membrane. This is Probable outer membrane protein pmp19 (pmp19) from Chlamydia pneumoniae (Chlamydophila pneumoniae).